The chain runs to 148 residues: Probable glycine cleavage system H protein 2 (148 aa).

The Lipoyl-binding domain occupies 32-114 (VIVVGITDIA…YGKGWLVKMK (83 aa)). K73 is subject to N6-lipoyllysine.

It belongs to the GcvH family. As to quaternary structure, the glycine cleavage system is composed of four proteins: P, T, L and H. (R)-lipoate serves as cofactor.

In terms of biological role, the glycine cleavage system catalyzes the degradation of glycine. The H protein shuttles the methylamine group of glycine from the P protein to the T protein. The polypeptide is Probable glycine cleavage system H protein 2 (Sulfurisphaera tokodaii (strain DSM 16993 / JCM 10545 / NBRC 100140 / 7) (Sulfolobus tokodaii)).